The primary structure comprises 217 residues: Growth hormone variant (217 aa).

The N-terminal stretch at 1-26 (MAAGSRTSLLLAFGLLCLSWLQEGSA) is a signal peptide. 2 disulfides stabilise this stretch: C79/C191 and C208/C215. A Phosphoserine modification is found at S132. N166 carries N-linked (GlcNAc...) asparagine glycosylation. Position 176 is a phosphoserine (S176).

The protein belongs to the somatotropin/prolactin family. Monomer, dimer, trimer, tetramer and pentamer, disulfide-linked or non-covalently associated, in homomeric and heteromeric combinations. Can also form a complex either with GHBP or with the alpha2-macroglobulin complex. Expressed in the placenta.

It is found in the secreted. Plays an important role in growth control. Its major role in stimulating body growth is to stimulate the liver and other tissues to secrete IGF1. It stimulates both the differentiation and proliferation of myoblasts. It also stimulates amino acid uptake and protein synthesis in muscle and other tissues. This chain is Growth hormone variant (GH2), found in Homo sapiens (Human).